Consider the following 173-residue polypeptide: Cytidylate kinase (173 aa).

7-15 contributes to the ATP binding site; it reads GLAGTGTST.

The protein belongs to the cytidylate kinase family. Type 2 subfamily.

It localises to the cytoplasm. It catalyses the reaction CMP + ATP = CDP + ADP. It carries out the reaction dCMP + ATP = dCDP + ADP. This chain is Cytidylate kinase, found in Methanosphaera stadtmanae (strain ATCC 43021 / DSM 3091 / JCM 11832 / MCB-3).